Consider the following 522-residue polypeptide: Terpineol synthase, chloroplastic (522 aa).

Positions 242, 279, 283, 414, and 417 each coordinate (2E)-geranyl diphosphate. Residues Asp279 and Asp283 each coordinate Mg(2+). The short motif at 279-283 (DDVYD) is the DDXXD motif element. 3 residues coordinate Mg(2+): Asn417, Thr421, and Glu425.

The protein belongs to the terpene synthase family. Tpsb subfamily. Monomer. Mg(2+) is required as a cofactor. It depends on Mn(2+) as a cofactor. As to expression, confined to flowers.

The protein localises to the plastid. The protein resides in the chloroplast. The enzyme catalyses (2E)-geranyl diphosphate + H2O = (S)-alpha-terpineol + diphosphate. It catalyses the reaction (2E)-geranyl diphosphate = sabinene + diphosphate. It carries out the reaction (2E)-geranyl diphosphate = beta-myrcene + diphosphate. The catalysed reaction is (2E)-geranyl diphosphate = limonene + diphosphate. The enzyme catalyses (2E)-geranyl diphosphate + H2O = 1,8-cineole + diphosphate. It catalyses the reaction (2E)-geranyl diphosphate = alpha-pinene + diphosphate. The protein operates within secondary metabolite biosynthesis; terpenoid biosynthesis. Its function is as follows. Monoterpene synthase (TPS) involved in the biosynthesis of monoterpene natural products of the 'cineole cassette', volatile compounds present in floral scent. Catalyzes the conversion of (2E)-geranyl diphosphate (GPP) into alpha-terpineol and, as minor products, sabinene, beta-myrcene, limonene, alpha-pinene and 1,8-cineole. The polypeptide is Terpineol synthase, chloroplastic (Nicotiana langsdorffii (Langsdorff's tobacco)).